The sequence spans 1645 residues: Cortactin-binding protein 2 (1645 aa).

5 disordered regions span residues Met1 to Lys28, Leu269 to Ile293, Ile366 to His435, Gly451 to Ser478, and Ala492 to Pro612. Positions Arg119–Lys276 form a coiled coil. Composition is skewed to polar residues over residues Gln407–Ala417 and Gly451–Asp477. Arg495 carries the asymmetric dimethylarginine modification. Residues Thr580–Gln590 show a composition bias toward polar residues. ANK repeat units lie at residues Gly706 to Tyr736, Asp740 to Ala769, Asn773 to His802, Glu806 to Val835, Asp839 to Arg868, and Glu909 to Arg939. A disordered region spans residues Arg868 to Ile898. The disordered stretch occupies residues Cys1442–Glu1479. Ser1521 carries the phosphoserine modification. The tract at residues Asp1551–Ile1645 is disordered. Polar residues-rich tracts occupy residues Ser1558–Val1569 and Pro1582–Lys1597. Over residues Ser1620–Gln1634 the composition is skewed to low complexity. A compositionally biased stretch (polar residues) spans Ile1635–Ile1645.

As to quaternary structure, interacts with CTTN/cortactin SH3 domain. Interacts with STRN, STRN4/zinedin and MOB4/phocein; this interactions mediate the association with the STRIPAK core complex and may regulate dendritic spine distribution of the STRIPAK complex in hippocampal neurons. Activation of glutamate receptors weakens the interaction with STRN and STRN4.

It is found in the cytoplasm. Its subcellular location is the cell cortex. The protein resides in the cell projection. The protein localises to the dendritic spine. In terms of biological role, regulates the dendritic spine distribution of CTTN/cortactin in hippocampal neurons, and thus controls dendritic spinogenesis and dendritic spine maintenance. Associates with the striatin-interacting phosphatase and kinase (STRIPAK) core complex to regulate dendritic spine distribution of the STRIPAK complex in hippocampal neurons. This Mustela putorius furo (European domestic ferret) protein is Cortactin-binding protein 2 (CTTNBP2).